Reading from the N-terminus, the 570-residue chain is Structure-specific endonuclease subunit EME1 (570 aa).

The span at 1 to 12 (MALKKSSPSLDS) shows a compositional bias: low complexity. Residues 1-42 (MALKKSSPSLDSGDSDSEELPTFAFLKKEPSSTKRRQPEREE) form a disordered region. A phosphoserine mark is found at S12 and S15. Residues 26 to 42 (LKKEPSSTKRRQPEREE) show a composition bias toward basic and acidic residues. Phosphoserine occurs at positions 84, 85, and 87. K103 is covalently cross-linked (Glycyl lysine isopeptide (Lys-Gly) (interchain with G-Cter in SUMO2)). Residues S111 and S117 each carry the phosphoserine modification. Residues K136 and K141 each participate in a glycyl lysine isopeptide (Lys-Gly) (interchain with G-Cter in SUMO2) cross-link. T150 is modified (phosphothreonine). Disordered regions lie at residues 187–233 (KTNS…ERKN) and 372–400 (AQNP…ASIG). Residues 220-233 (RQKESTLRRQERKN) show a composition bias toward basic and acidic residues. A nuclease-like domain; forms the post-nick DNA binding interface and is involved in DNA recognition and bending region spans residues 250–456 (KHIIVVLDPV…PFKKLRDETT (207 aa)). Positions 476-570 (RGLALVWRRQ…QPHLSLDSAD (95 aa)) are helix-hairpin-helix (2HhH); forms the pre-nick DNA binding interface and is involved in DNA recognition and bending.

This sequence belongs to the EME1/MMS4 family. In terms of assembly, part of the heterodimeric MUS81-EME1 complex.

It is found in the nucleus. The protein localises to the nucleolus. In terms of biological role, non-catalytic subunit of the structure-specific, heterodimeric DNA endonuclease MUS81-EME1 which is involved in the maintenance of genome stability. In the complex, EME1 is required for DNA cleavage, participating in DNA recognition and bending. MUS81-EME1 cleaves 3'-flaps and nicked Holliday junctions, and exhibit limited endonuclease activity with 5' flaps and nicked double-stranded DNAs. Active during prometaphase, MUS81-EME1 resolves mitotic recombination intermediates, including Holliday junctions, which form during homologous recombination. The sequence is that of Structure-specific endonuclease subunit EME1 from Homo sapiens (Human).